The sequence spans 299 residues: Apolipoprotein E (299 aa).

Positions 1–18 (MKVLCTVLVVTLLAGCRA) are cleaved as a signal peptide. The segment at 74-245 (VLMEDTMKAV…RLEEVREQME (172 aa)) is 8 X 22 AA approximate tandem repeats. A run of 8 repeats spans residues 75–95 (LMEDTMKAVKAYKSELEQELV), 96–117 (PMAEDTKARLSKELQAAQARLG), 118–139 (ADMEEVRNRLALYRNEMQAMLG), 140–161 (QSAEELRARLASHLRKLRKRML), 162–183 (RDAEDLQKRLAVYKDGASEGAE), 184–206 (RGVSAIRERLGSLVEQSRVRAAL), 207–225 (TSQPLQERAQAWGKQLRGR), and 224–242 (GRLEEVRGQAQDRLEEVRE). A Methionine sulfoxide modification is found at Met137. The residue at position 141 (Ser141) is a Phosphoserine. Residues 152–162 (HLRKLRKRMLR) form an LDL and other lipoprotein receptors binding region. 156–159 (LRKR) provides a ligand contact to heparin. Positions 205–273 (ALTSQPLQER…GWFEPMVEDM (69 aa)) are lipid-binding and lipoprotein association. Heparin is bound at residue 219–226 (GKQLRGRL). Positions 261 to 273 (RLKGWFEPMVEDM) are specificity for association with VLDL.

It belongs to the apolipoprotein A1/A4/E family. In terms of assembly, homotetramer. May interact with ABCA1; functionally associated with ABCA1 in the biogenesis of HDLs. May interact with APP/A4 amyloid-beta peptide; the interaction is extremely stable in vitro but its physiological significance is unclear. May interact with MAPT. May interact with MAP2. In the cerebrospinal fluid, interacts with secreted SORL1. Interacts with PMEL; this allows the loading of PMEL luminal fragment on ILVs to induce fibril nucleation. APOE exists as multiple glycosylated and sialylated glycoforms within cells and in plasma. The extent of glycosylation and sialylation are tissue and context specific. In terms of processing, glycated in plasma VLDL. Post-translationally, phosphorylated by FAM20C in the extracellular medium.

The protein resides in the secreted. Its subcellular location is the extracellular space. The protein localises to the extracellular matrix. It localises to the extracellular vesicle. It is found in the endosome. The protein resides in the multivesicular body. Functionally, APOE is an apolipoprotein, a protein associating with lipid particles, that mainly functions in lipoprotein-mediated lipid transport between organs via the plasma and interstitial fluids. APOE is a core component of plasma lipoproteins and is involved in their production, conversion and clearance. Apolipoproteins are amphipathic molecules that interact both with lipids of the lipoprotein particle core and the aqueous environment of the plasma. As such, APOE associates with chylomicrons, chylomicron remnants, very low density lipoproteins (VLDL) and intermediate density lipoproteins (IDL) but shows a preferential binding to high-density lipoproteins (HDL). It also binds a wide range of cellular receptors including the LDL receptor/LDLR, the LDL receptor-related proteins LRP1, LRP2 and LRP8 and the very low-density lipoprotein receptor/VLDLR that mediate the cellular uptake of the APOE-containing lipoprotein particles. Finally, APOE also has a heparin-binding activity and binds heparan-sulfate proteoglycans on the surface of cells, a property that supports the capture and the receptor-mediated uptake of APOE-containing lipoproteins by cells. A main function of APOE is to mediate lipoprotein clearance through the uptake of chylomicrons, VLDLs, and HDLs by hepatocytes. APOE is also involved in the biosynthesis by the liver of VLDLs as well as their uptake by peripheral tissues ensuring the delivery of triglycerides and energy storage in muscle, heart and adipose tissues. By participating in the lipoprotein-mediated distribution of lipids among tissues, APOE plays a critical role in plasma and tissues lipid homeostasis. APOE is also involved in two steps of reverse cholesterol transport, the HDLs-mediated transport of cholesterol from peripheral tissues to the liver, and thereby plays an important role in cholesterol homeostasis. First, it is functionally associated with ABCA1 in the biogenesis of HDLs in tissues. Second, it is enriched in circulating HDLs and mediates their uptake by hepatocytes. APOE also plays an important role in lipid transport in the central nervous system, regulating neuron survival and sprouting. This Tympanoctomys barrerae (Plains viscacha rat) protein is Apolipoprotein E (Apoe).